The sequence spans 231 residues: DNA mismatch repair protein MutH (231 aa).

The protein belongs to the MutH family.

Its subcellular location is the cytoplasm. Its function is as follows. Sequence-specific endonuclease that cleaves unmethylated GATC sequences. It is involved in DNA mismatch repair. The sequence is that of DNA mismatch repair protein MutH from Salmonella paratyphi A (strain ATCC 9150 / SARB42).